The following is a 414-amino-acid chain: MRYLPEVDPEIYEAIKSEEYREEYHLELIASENFVSRAVLEAQGSVLTNKYAEGYPGKRYYGGCLYVDKVEDIARERVKAIYGAEHANVQPHSGSQANMAVYFVVLNPGDRVLGMNLAHGGHLTHGSPVNFSGKLYNFYFYGVDKNTEMINYDSVWNLAKELKPKLIVAGASAYPRIIDFEKFAQIAEDVGAYFMVDMAHIAGLVAAGLHPSPVPYAHFVTSTTHKTLRGPRGGFILCKKEFAKEIDKAVFPGIQGGPLMHVIAAKAVAFKEAMSPEFKEYQKQIVLNAKAMAEELIKLGYRLVSGGTDNHLMLVDLRDKGITGKEAEKALEEAGITVNKNAIPFDPQPPTITSGIRIGTPALTTRGMKEDEMRYIARLIHEVLSNFKDERVKEKVKKEVEELCKQFPIYRKEN.

(6S)-5,6,7,8-tetrahydrofolate-binding positions include leucine 117 and 121–123; that span reads GHL. At lysine 226 the chain carries N6-(pyridoxal phosphate)lysine.

Belongs to the SHMT family. As to quaternary structure, homodimer. It depends on pyridoxal 5'-phosphate as a cofactor.

The protein resides in the cytoplasm. The catalysed reaction is (6R)-5,10-methylene-5,6,7,8-tetrahydrofolate + glycine + H2O = (6S)-5,6,7,8-tetrahydrofolate + L-serine. It functions in the pathway one-carbon metabolism; tetrahydrofolate interconversion. Its pathway is amino-acid biosynthesis; glycine biosynthesis; glycine from L-serine: step 1/1. Catalyzes the reversible interconversion of serine and glycine with tetrahydrofolate (THF) serving as the one-carbon carrier. This reaction serves as the major source of one-carbon groups required for the biosynthesis of purines, thymidylate, methionine, and other important biomolecules. Also exhibits THF-independent aldolase activity toward beta-hydroxyamino acids, producing glycine and aldehydes, via a retro-aldol mechanism. The chain is Serine hydroxymethyltransferase from Dictyoglomus turgidum (strain DSM 6724 / Z-1310).